We begin with the raw amino-acid sequence, 946 residues long: DNA ligase 4 (946 aa).

Residues E295, K297, R302, E355, F397, E457, K462, K479, and K481 each contribute to the ATP site. K297 (N6-AMP-lysine intermediate) is an active-site residue. Position 355 (E355) interacts with Mg(2+). Residue E457 coordinates Mg(2+). 2 consecutive BRCT domains span residues 688 to 787 and 845 to 945; these read HRSD…PSHC and VPHF…NYRL.

It belongs to the ATP-dependent DNA ligase family. It depends on Mg(2+) as a cofactor.

Its subcellular location is the nucleus. The catalysed reaction is ATP + (deoxyribonucleotide)n-3'-hydroxyl + 5'-phospho-(deoxyribonucleotide)m = (deoxyribonucleotide)n+m + AMP + diphosphate.. Functionally, DNA ligase involved in DNA non-homologous end joining (NHEJ); required for double-strand break (DSB) repair. This is DNA ligase 4 (LIG4) from Candida glabrata (strain ATCC 2001 / BCRC 20586 / JCM 3761 / NBRC 0622 / NRRL Y-65 / CBS 138) (Yeast).